The primary structure comprises 215 residues: Endonuclease III (215 aa).

Residues 113–132 (REDLESLPGVGRKTANVILN) form the HhH domain. 4 residues coordinate [4Fe-4S] cluster: Cys-192, Cys-199, Cys-202, and Cys-208.

The protein belongs to the Nth/MutY family. Requires [4Fe-4S] cluster as cofactor.

It carries out the reaction 2'-deoxyribonucleotide-(2'-deoxyribose 5'-phosphate)-2'-deoxyribonucleotide-DNA = a 3'-end 2'-deoxyribonucleotide-(2,3-dehydro-2,3-deoxyribose 5'-phosphate)-DNA + a 5'-end 5'-phospho-2'-deoxyribonucleoside-DNA + H(+). In terms of biological role, DNA repair enzyme that has both DNA N-glycosylase activity and AP-lyase activity. The DNA N-glycosylase activity releases various damaged pyrimidines from DNA by cleaving the N-glycosidic bond, leaving an AP (apurinic/apyrimidinic) site. The AP-lyase activity cleaves the phosphodiester bond 3' to the AP site by a beta-elimination, leaving a 3'-terminal unsaturated sugar and a product with a terminal 5'-phosphate. This Buchnera aphidicola subsp. Baizongia pistaciae (strain Bp) protein is Endonuclease III.